A 515-amino-acid polypeptide reads, in one-letter code: MGKISGSGTVAPHILVIFGASGDLAARKLIPSLWDLFEQELLPRTFGILGAGRTALSTESFRARLAEAVTKHAVRTPHDPARLTEFLQKIHYFSFDPTDSVAFADFATYVRTLDQSLHTEGNFIFYLATPPSLYETIPTQLAMHHLNREQGNFRRVVIEKPFGYNLETAQHLNASLRAHFQENQTYRIDHYLGKETVQNILVTRFANPLFEPTWNRTHIDYVEITASESLGVENRGGYYDQSGALRDMIQNHLLLLLGIIAMEAPAVVSSSRLRDEIVKVFDCLRPMGERDVMQHTVRAQYVAGKIRGVAVPGYLEESGVDPRSCTETFAALKCYIDNWRWMDVPFYLRTGKRLPTGVTEVIVHYRTLPIALFEHIERPCAREGNALVIRIQPDEGIQLKIDLKEPGAGFKTIPVSVDFQYSALTYSHLPSAYERLLLDCMNGDNTLYHRDDAVESAWRFIDPILAAWKSNKSPLLTYPAGSWGPKAADDLIKGSAPRWHHPSSTLLSDDFACRL.

Residues R53 and K160 each coordinate NADP(+). Residues H190, K194, E228, and D247 each coordinate substrate. H252 functions as the Proton acceptor in the catalytic mechanism. A substrate-binding site is contributed by K352.

It belongs to the glucose-6-phosphate dehydrogenase family.

It catalyses the reaction D-glucose 6-phosphate + NADP(+) = 6-phospho-D-glucono-1,5-lactone + NADPH + H(+). It functions in the pathway carbohydrate degradation; pentose phosphate pathway; D-ribulose 5-phosphate from D-glucose 6-phosphate (oxidative stage): step 1/3. Its function is as follows. Catalyzes the oxidation of glucose 6-phosphate to 6-phosphogluconolactone. This Treponema pallidum (strain Nichols) protein is Glucose-6-phosphate 1-dehydrogenase.